A 196-amino-acid chain; its full sequence is Carnitine operon protein CaiE (196 aa).

The tract at residues 173–196 is disordered; sequence TQPLRQMEENRPRLQGTTDVTPKR. Polar residues predominate over residues 187 to 196; sequence QGTTDVTPKR.

This sequence belongs to the transferase hexapeptide repeat family.

Its pathway is amine and polyamine metabolism; carnitine metabolism. In terms of biological role, overproduction of CaiE stimulates the activity of CaiB and CaiD. The chain is Carnitine operon protein CaiE from Escherichia coli O7:K1 (strain IAI39 / ExPEC).